The sequence spans 257 residues: MLILVSPAKTLDFEQPPLTQVYSQPDFLTHSQELIQVCRQLTPSDIATLMKVSDKIAGLNAARFGQWQPDFSLDNAKQAIFAFRGDVYTGFDADTLSEDEIAQTQSQLRILSGLYGLLRPLDLIMPYRLEMGTALSNPKGKNLYEFWGDTLTQAVNEALAESGSDIIVNLASNEYFKAIKPKKLQGQLISPVFKDCKNGQYKVISFFAKRARGMMARYIITNKVNTLAELRAFNLAGYYYSEEQSSPTNPTFLRAEQ.

Belongs to the UPF0246 family.

This chain is UPF0246 protein Sbal195_1149, found in Shewanella baltica (strain OS195).